The sequence spans 440 residues: Adenylosuccinate synthetase (440 aa).

Residues glycine 12–lysine 18 and glycine 40–threonine 42 contribute to the GTP site. Residue aspartate 13 is the Proton acceptor of the active site. Residues aspartate 13 and glycine 40 each coordinate Mg(2+). Residues aspartate 13 to lysine 16, asparagine 38 to histidine 41, threonine 128, arginine 142, glutamine 223, threonine 238, and arginine 302 contribute to the IMP site. Catalysis depends on histidine 41, which acts as the Proton donor. Threonine 298–arginine 304 contributes to the substrate binding site. GTP contacts are provided by residues arginine 304, lysine 330 to aspartate 332, and serine 412 to glycine 414.

This sequence belongs to the adenylosuccinate synthetase family. In terms of assembly, homodimer. Mg(2+) serves as cofactor.

It localises to the cytoplasm. It carries out the reaction IMP + L-aspartate + GTP = N(6)-(1,2-dicarboxyethyl)-AMP + GDP + phosphate + 2 H(+). The protein operates within purine metabolism; AMP biosynthesis via de novo pathway; AMP from IMP: step 1/2. Its function is as follows. Plays an important role in the de novo pathway of purine nucleotide biosynthesis. Catalyzes the first committed step in the biosynthesis of AMP from IMP. The chain is Adenylosuccinate synthetase from Gloeobacter violaceus (strain ATCC 29082 / PCC 7421).